Consider the following 309-residue polypeptide: Aspartate carbamoyltransferase catalytic subunit (309 aa).

The carbamoyl phosphate site is built by R58 and T59. K86 is a binding site for L-aspartate. R108, H136, and Q139 together coordinate carbamoyl phosphate. Residues R169 and R223 each contribute to the L-aspartate site. Carbamoyl phosphate-binding residues include G265 and P266.

Belongs to the aspartate/ornithine carbamoyltransferase superfamily. ATCase family. In terms of assembly, heterododecamer (2C3:3R2) of six catalytic PyrB chains organized as two trimers (C3), and six regulatory PyrI chains organized as three dimers (R2).

It catalyses the reaction carbamoyl phosphate + L-aspartate = N-carbamoyl-L-aspartate + phosphate + H(+). Its pathway is pyrimidine metabolism; UMP biosynthesis via de novo pathway; (S)-dihydroorotate from bicarbonate: step 2/3. Functionally, catalyzes the condensation of carbamoyl phosphate and aspartate to form carbamoyl aspartate and inorganic phosphate, the committed step in the de novo pyrimidine nucleotide biosynthesis pathway. The chain is Aspartate carbamoyltransferase catalytic subunit from Akkermansia muciniphila (strain ATCC BAA-835 / DSM 22959 / JCM 33894 / BCRC 81048 / CCUG 64013 / CIP 107961 / Muc).